The chain runs to 257 residues: Gasdermin-like protein rcd-1-1 (257 aa).

Belongs to the gasdermin family. Heterooligomer; the heterooligomer with rcd-1-2 forms a ring-shaped pore complex when inserted in the membrane.

It localises to the cytoplasm. Its subcellular location is the cell membrane. Gasdermin-like protein involved in heterokaryon incompatibility, a process that ensures that during spontaneous vegetative cell fusion, only compatible cells from the same colony survive (non-self-recognition). In N.crassa, the rcd-1 locus exists as 2 incompatible alleles, rcd-1-1 (this entry) and rcd-1-2 (AC P0DW10). During the allorecognition process, forms a heterooligomer with rcd-1-2, thereby forming a functional gasdermin-like complex that binds to membranes and forms pores, triggering cell death. Binds negatively charged phospholipids, such as cardiolipin and phosphatidylserine. Also binds to phosphoinositides, preferentially to phosphatidylinositol-3-phosphate (PtdIns-3-P), PtdIns-5-P and PtdIns-3,5-P2. This is Gasdermin-like protein rcd-1-1 from Neurospora crassa (strain ATCC 24698 / 74-OR23-1A / CBS 708.71 / DSM 1257 / FGSC 987).